A 98-amino-acid polypeptide reads, in one-letter code: NADH-ubiquinone oxidoreductase chain 4L (98 aa).

A run of 3 helical transmembrane segments spans residues 1-21 (MASI…GVLI), 26-46 (LMST…MMTL), and 59-79 (APLI…ALLV).

Belongs to the complex I subunit 4L family. In terms of assembly, core subunit of respiratory chain NADH dehydrogenase (Complex I) which is composed of 45 different subunits.

It is found in the mitochondrion inner membrane. The enzyme catalyses a ubiquinone + NADH + 5 H(+)(in) = a ubiquinol + NAD(+) + 4 H(+)(out). In terms of biological role, core subunit of the mitochondrial membrane respiratory chain NADH dehydrogenase (Complex I) which catalyzes electron transfer from NADH through the respiratory chain, using ubiquinone as an electron acceptor. Part of the enzyme membrane arm which is embedded in the lipid bilayer and involved in proton translocation. This chain is NADH-ubiquinone oxidoreductase chain 4L (MT-ND4L), found in Caenolestes fuliginosus (Shrew opossum).